The sequence spans 347 residues: MLEEEDFYLFKNVSNVSPFDGPQYHIAPKWAFTLQAIFMGMVFLIGTPLNFIVLLVTIKYKKLRQPLNYILVNITVGGFLMCIFSIFPVFVSSSQGYFFFGRIACSIDAFVGTLTGLVTGWSLAFLAFERYIVICKPMGNFNFSSSHALAVVICTWIIGIVVSVPPFLGWSRYMPEGLQCSCGPDWYTVGTKYRSEYYTWFIFIFCFVIPLSLICFSYGRLLGALRAVAAQQQESASTQKAEREVSRMVIFMVGSFCLCYVPYAAMAMYMVTNRNHGLDLRLVTIPAFFSKSSCVYNPIIYSFMNKQFRGCIMETVCGRPMSDDSSVSSTSQRTEVSTVSSSQVSPA.

Topologically, residues 1-31 (MLEEEDFYLFKNVSNVSPFDGPQYHIAPKWA) are extracellular. N12 is a glycosylation site (N-linked (GlcNAc...) asparagine). The chain crosses the membrane as a helical span at residues 32-56 (FTLQAIFMGMVFLIGTPLNFIVLLV). Residues 57–68 (TIKYKKLRQPLN) are Cytoplasmic-facing. Residues 69 to 94 (YILVNITVGGFLMCIFSIFPVFVSSS) form a helical membrane-spanning segment. Topologically, residues 95–108 (QGYFFFGRIACSID) are extracellular. C105 and C182 are joined by a disulfide. Residues 109–128 (AFVGTLTGLVTGWSLAFLAF) traverse the membrane as a helical segment. The Cytoplasmic segment spans residues 129-147 (ERYIVICKPMGNFNFSSSH). A helical membrane pass occupies residues 148-171 (ALAVVICTWIIGIVVSVPPFLGWS). Over 172–197 (RYMPEGLQCSCGPDWYTVGTKYRSEY) the chain is Extracellular. The chain crosses the membrane as a helical span at residues 198 to 225 (YTWFIFIFCFVIPLSLICFSYGRLLGAL). The Cytoplasmic portion of the chain corresponds to 226-247 (RAVAAQQQESASTQKAEREVSR). The helical transmembrane segment at 248-271 (MVIFMVGSFCLCYVPYAAMAMYMV) threads the bilayer. Residues 272–279 (TNRNHGLD) are Extracellular-facing. The chain crosses the membrane as a helical span at residues 280–304 (LRLVTIPAFFSKSSCVYNPIIYSFM). Position 291 is an N6-(retinylidene)lysine (K291). Topologically, residues 305 to 347 (NKQFRGCIMETVCGRPMSDDSSVSSTSQRTEVSTVSSSQVSPA) are cytoplasmic. A disordered region spans residues 323 to 347 (DDSSVSSTSQRTEVSTVSSSQVSPA).

The protein belongs to the G-protein coupled receptor 1 family. Opsin subfamily. Post-translationally, phosphorylated on some or all of the serine and threonine residues present in the C-terminal region. The color pigments are found in the cone photoreceptor cells.

It is found in the membrane. Its function is as follows. Visual pigments are the light-absorbing molecules that mediate vision. They consist of an apoprotein, opsin, covalently linked to cis-retinal. The chain is Violet-sensitive opsin from Xenopus laevis (African clawed frog).